Consider the following 41-residue polypeptide: Photosystem I reaction center subunit IX (41 aa).

The helical transmembrane segment at Tyr-7 to Ile-27 threads the bilayer.

The protein belongs to the PsaJ family.

It localises to the cellular thylakoid membrane. Functionally, may help in the organization of the PsaE and PsaF subunits. This is Photosystem I reaction center subunit IX from Synechococcus sp. (strain ATCC 27144 / PCC 6301 / SAUG 1402/1) (Anacystis nidulans).